The sequence spans 125 residues: Methylglyoxal synthase (125 aa).

The 125-residue stretch at 1 to 125 (MTERLRIALI…TAEKLIKALD (125 aa)) folds into the MGS-like domain. Substrate is bound by residues H12, K16, 38–41 (TGTT), and 59–60 (SG). Catalysis depends on D65, which acts as the Proton donor/acceptor. Residue H92 coordinates substrate.

The protein belongs to the methylglyoxal synthase family.

The catalysed reaction is dihydroxyacetone phosphate = methylglyoxal + phosphate. In terms of biological role, catalyzes the formation of methylglyoxal from dihydroxyacetone phosphate. The sequence is that of Methylglyoxal synthase from Brucella anthropi (strain ATCC 49188 / DSM 6882 / CCUG 24695 / JCM 21032 / LMG 3331 / NBRC 15819 / NCTC 12168 / Alc 37) (Ochrobactrum anthropi).